The sequence spans 287 residues: Large ribosomal subunit protein uL2 (287 aa).

Residues 221 to 287 form a disordered region; it reads RGSVMNPCDH…SKRSRGGRDS (67 aa). The segment covering 258 to 287 has biased composition (basic residues); sequence KTRKKNKPSNKLVVRRRRRVSKRSRGGRDS.

This sequence belongs to the universal ribosomal protein uL2 family. In terms of assembly, part of the 50S ribosomal subunit. Forms a bridge to the 30S subunit in the 70S ribosome.

Functionally, one of the primary rRNA binding proteins. Required for association of the 30S and 50S subunits to form the 70S ribosome, for tRNA binding and peptide bond formation. It has been suggested to have peptidyltransferase activity; this is somewhat controversial. Makes several contacts with the 16S rRNA in the 70S ribosome. This is Large ribosomal subunit protein uL2 from Prochlorococcus marinus (strain AS9601).